The following is a 284-amino-acid chain: UDP-N-acetylenolpyruvoylglucosamine reductase (284 aa).

An FAD-binding PCMH-type domain is found at 21 to 180 (KIGGPARLFV…LKAAFKLKKA (160 aa)). Arg-159 is an active-site residue. Ser-209 functions as the Proton donor in the catalytic mechanism. Residue Glu-280 is part of the active site.

The protein belongs to the MurB family. The cofactor is FAD.

It localises to the cytoplasm. The enzyme catalyses UDP-N-acetyl-alpha-D-muramate + NADP(+) = UDP-N-acetyl-3-O-(1-carboxyvinyl)-alpha-D-glucosamine + NADPH + H(+). It functions in the pathway cell wall biogenesis; peptidoglycan biosynthesis. In terms of biological role, cell wall formation. The sequence is that of UDP-N-acetylenolpyruvoylglucosamine reductase from Pseudothermotoga lettingae (strain ATCC BAA-301 / DSM 14385 / NBRC 107922 / TMO) (Thermotoga lettingae).